The following is a 585-amino-acid chain: Exonuclease V, mitochondrial (585 aa).

The N-terminal 26 residues, 1 to 26, are a transit peptide targeting the mitochondrion; sequence MLGRALINKYGFLIHPRRFVHLNDKS. Residue Cys141 participates in [4Fe-4S] cluster binding. Residues Asp270 and Asp320 each contribute to the Mg(2+) site. [4Fe-4S] cluster-binding residues include Cys549, Cys552, and Cys558.

The protein belongs to the EXO5 family. As to quaternary structure, monomer. Requires Mg(2+) as cofactor. [4Fe-4S] cluster is required as a cofactor.

It is found in the mitochondrion. Single strand DNA specific 5' exonuclease involved in mitochondrial DNA replication and recombination. Releases dinucleotides as main products of catalysis. Has the capacity to slide across 5'double-stranded DNA or 5'RNA sequences and resumes cutting two nucleotides downstream of the double-stranded-to-single-stranded junction or RNA-to-DNA junction, respectively. This chain is Exonuclease V, mitochondrial (EXO5), found in Saccharomyces cerevisiae (strain ATCC 204508 / S288c) (Baker's yeast).